Here is a 99-residue protein sequence, read N- to C-terminus: Malonate decarboxylase acyl carrier protein (99 aa).

Serine 25 bears the O-(phosphoribosyl dephospho-coenzyme A)serine mark.

It belongs to the MdcC family. Post-translationally, covalently binds the prosthetic group of malonate decarboxylase.

The protein resides in the cytoplasm. Subunit of malonate decarboxylase, it is an acyl carrier protein to which acetyl and malonyl thioester residues are bound via a 2'-(5''-phosphoribosyl)-3'-dephospho-CoA prosthetic group and turn over during the catalytic mechanism. This chain is Malonate decarboxylase acyl carrier protein, found in Pseudomonas fluorescens (strain Pf0-1).